A 291-amino-acid chain; its full sequence is UDP-N-acetylenolpyruvoylglucosamine reductase (291 aa).

An FAD-binding PCMH-type domain is found at Gly19–Gly186. The active site involves Arg165. Catalysis depends on Ser215, which acts as the Proton donor. Glu285 is a catalytic residue.

Belongs to the MurB family. Requires FAD as cofactor.

It is found in the cytoplasm. The catalysed reaction is UDP-N-acetyl-alpha-D-muramate + NADP(+) = UDP-N-acetyl-3-O-(1-carboxyvinyl)-alpha-D-glucosamine + NADPH + H(+). Its pathway is cell wall biogenesis; peptidoglycan biosynthesis. Its function is as follows. Cell wall formation. The protein is UDP-N-acetylenolpyruvoylglucosamine reductase of Prochlorococcus marinus (strain NATL2A).